The primary structure comprises 428 residues: 3-phosphoshikimate 1-carboxyvinyltransferase (428 aa).

3 residues coordinate 3-phosphoshikimate: lysine 22, serine 23, and arginine 27. Lysine 22 provides a ligand contact to phosphoenolpyruvate. 2 residues coordinate phosphoenolpyruvate: glycine 96 and arginine 124. 6 residues coordinate 3-phosphoshikimate: serine 171, serine 172, glutamine 173, serine 198, aspartate 311, and lysine 338. Glutamine 173 lines the phosphoenolpyruvate pocket. Residue aspartate 311 is the Proton acceptor of the active site. Positions 342 and 383 each coordinate phosphoenolpyruvate.

It belongs to the EPSP synthase family. In terms of assembly, monomer.

Its subcellular location is the cytoplasm. The catalysed reaction is 3-phosphoshikimate + phosphoenolpyruvate = 5-O-(1-carboxyvinyl)-3-phosphoshikimate + phosphate. It functions in the pathway metabolic intermediate biosynthesis; chorismate biosynthesis. Its function is as follows. Catalyzes the transfer of the enolpyruvyl moiety of phosphoenolpyruvate (PEP) to the 5-hydroxyl of shikimate-3-phosphate (S3P) to produce enolpyruvyl shikimate-3-phosphate and inorganic phosphate. This is 3-phosphoshikimate 1-carboxyvinyltransferase from Methanopyrus kandleri (strain AV19 / DSM 6324 / JCM 9639 / NBRC 100938).